The chain runs to 496 residues: MTIHIKNNVNWVGQRDWEVSDFHGTEFKMTKGTSYNSYLIQEEKTVLIDTVDHRFSHQFIQNLEMEIDLASIDYIVINHAEEDHSGALAALMEKIPGTPIYCTENAIDSIVGHHHHPEWNFNPIKTGDALDIGNGKQLIFVEAPMLHWPDSMMTYLTGDAILFSNDAFGQHYCDERLFNDEVDQTELMDQCLRYYANILTPFSALVTAKIKEVLSFNLPVDMIATSHGCVWRDNPTQIIHQYLEWADNYQEDRITIFYDSMSNNTRMMADAIAQGIHDVDPAVAVKVFNVSRQDKNDILTSVFRSKGILVGSSTMNNVMMPKIAGMLEEIAGLRFRAKKAGAFGSYGWNGGAVDRIHSRLTDAGFETAVGLKAKWRPDGQAMKLCREHGQFIAKQWALAPLTTTFNTINVDKKIQTIEEPVVLVEPSAELEKPATEVTSSKDAKQCMLCSVCNWVYDPEIGEPNQGVEPNTPWSSVPNDFLCPECHLGKDVFVEIK.

The zinc metallo-hydrolase stretch occupies residues 30–210 (TKGTSYNSYL…PFSALVTAKI (181 aa)). Histidine 79, glutamate 81, aspartate 83, histidine 147, aspartate 166, and histidine 227 together coordinate Fe cation. A Flavodoxin-like domain is found at 254 to 393 (ITIFYDSMSN…LCREHGQFIA (140 aa)). Residues 260-264 (SMSNN) and 342-369 (AFGSYGWNGGAVDRIHSRLTDAGFETAV) contribute to the FMN site. The 52-residue stretch at 444-495 (KQCMLCSVCNWVYDPEIGEPNQGVEPNTPWSSVPNDFLCPECHLGKDVFVEI) folds into the Rubredoxin-like domain. Fe cation-binding residues include cysteine 449, cysteine 452, cysteine 482, and cysteine 485.

It in the N-terminal section; belongs to the zinc metallo-hydrolase group 3 family. Homotetramer. Fe cation is required as a cofactor. It depends on FMN as a cofactor.

It is found in the cytoplasm. It participates in nitrogen metabolism; nitric oxide reduction. Its function is as follows. Anaerobic nitric oxide reductase; uses NADH to detoxify nitric oxide (NO), protecting several 4Fe-4S NO-sensitive enzymes. Has at least 2 reductase partners, only one of which (NorW, flavorubredoxin reductase) has been identified. NO probably binds to the di-iron center; electrons enter from the NorW at rubredoxin and are transferred sequentially to the FMN center and the di-iron center. Also able to function as an aerobic oxygen reductase. This is Anaerobic nitric oxide reductase flavorubredoxin from Aliivibrio fischeri (strain ATCC 700601 / ES114) (Vibrio fischeri).